The primary structure comprises 637 residues: Sodium-dependent nutrient amino acid transporter 1 (637 aa).

Positions 1–17 are enriched in polar residues; sequence MELKTMPQNGANAGTQH. The interval 1–39 is disordered; that stretch reads MELKTMPQNGANAGTQHNNNSNNKPDNNEKEAQKKEPER. Residues 1 to 47 lie on the Cytoplasmic side of the membrane; that stretch reads MELKTMPQNGANAGTQHNNNSNNKPDNNEKEAQKKEPERTNWSNGLE. The span at 26–39 shows a compositional bias: basic and acidic residues; it reads DNNEKEAQKKEPER. Helical transmembrane passes span 48 to 68, 75 to 95, and 128 to 148; these read FLMSCISVSVGLGNVWRFPFT, GAFLIPYIIVLFLIGKPMYYL, and TICIITYYSSLLALTVYYLFV. N-linked (GlcNAc...) asparagine glycans are attached at residues N181 and N195. The next 9 membrane-spanning stretches (helical) occupy residues 225–245, 254–274, 303–323, 337–357, 397–417, 443–463, 470–490, 515–535, and 549–569; these read PDWKLTIALFVSWVVIFLVIM, AAYFLALFPYVVLFALLGRAV, AVVQCFFSLAVGCGPIIMFAS, IVTTLDTLTSLLGGITIFAIL, LFSALFFFMLFVLGIGSIVAL, ICGFLMGLVYVTPGGQWILTL, TYVVFILAIFELAGIVWIYGL, FFTPIMMIVIFIYSMVTISPI, and AGWVLFAVGAAQFPLWGWWYI.

The protein belongs to the sodium:neurotransmitter symporter (SNF) (TC 2.A.22) family.

Its subcellular location is the membrane. Its function is as follows. Unusual broad substrate spectrum amino acid:sodium cotransporter that promotes absorption of the D isomers of essential amino acids. Neutral amino acids are the preferred substrates, especially methionine and phenylalanine. This Drosophila virilis (Fruit fly) protein is Sodium-dependent nutrient amino acid transporter 1.